Here is an 883-residue protein sequence, read N- to C-terminus: NF-X1-type zinc finger protein NFXL2 (883 aa).

Over residues 1 to 10 the composition is skewed to polar residues; that stretch reads MTNMAGTATT. The interval 1-44 is disordered; the sequence is MTNMAGTATTEFRWKSPPQPPSQEQPISDSDSDSGSDSENHQHR. An RING-type; degenerate zinc finger spans residues 87 to 152; it reads CLICLERIKR…EAVWNCPKCR (66 aa). NF-X1-type zinc fingers lie at residues 198 to 216, 250 to 269, 303 to 322, 357 to 377, 410 to 429, 437 to 456, 494 to 515, 523 to 568, 605 to 636, 646 to 664, and 709 to 738; these read CGHC…SCPK, CNIH…PCRE, CGKH…LCPY, CGYH…TCRI, CARH…PCSE, CRNH…PCPI, CRHG…PCRL, CGHK…RCPE, CGNH…KCDL, CQHP…PCKT, and CTHL…RCKC. The tract at residues 798–824 is disordered; the sequence is EIEEKEEPSGKNASKRRKRRGRGQDIQ. Residues 841-863 form a helical membrane-spanning segment; it reads MVVMLVAMLAAVSYYGYKGLLWL.

It belongs to the NFX1 family. Interacts with ADO1/ZTL. As to expression, constitutively expressed in mesophyll and guard cells.

The protein resides in the nucleus. Its subcellular location is the membrane. It participates in protein modification; protein ubiquitination. In terms of biological role, probable transcriptional regulator. May mediate E2- or E3-dependent ubiquitination. Required to gate light sensitivity during the night. Regulates the speed of the clock by acting in the feedback loop between CCA1, LHY and APRR1/TOC1. Promotes the expression of CCA1 at night but not by days. This activational effect is enhanced by interaction with ADO1/ZTL. Association with ADO1/ZTL is not leading to the degradation of NFXL2. Confers sensitivity to osmotic stress such as high salinity. Prevents H(2)O(2) production and abscisic acid accumulation. Part of a regulatory network that integrates the biosynthesis and action of abscisic acid, reactive oxygen species and cuticle components. This is NF-X1-type zinc finger protein NFXL2 (NFXL2) from Arabidopsis thaliana (Mouse-ear cress).